The following is an 82-amino-acid chain: Small ribosomal subunit protein uS17 (82 aa).

This sequence belongs to the universal ribosomal protein uS17 family. Part of the 30S ribosomal subunit.

Its function is as follows. One of the primary rRNA binding proteins, it binds specifically to the 5'-end of 16S ribosomal RNA. This Rhodopseudomonas palustris (strain TIE-1) protein is Small ribosomal subunit protein uS17.